Here is a 136-residue protein sequence, read N- to C-terminus: Putative pre-16S rRNA nuclease (136 aa).

This sequence belongs to the YqgF nuclease family.

Its subcellular location is the cytoplasm. In terms of biological role, could be a nuclease involved in processing of the 5'-end of pre-16S rRNA. In Francisella tularensis subsp. tularensis (strain WY96-3418), this protein is Putative pre-16S rRNA nuclease.